The sequence spans 198 residues: Putative pseudouridine methyltransferase (198 aa).

2 residues coordinate S-adenosyl-L-methionine: Met-132 and Cys-186.

This sequence belongs to the methyltransferase superfamily. TrmY family.

The protein resides in the cytoplasm. This Shewanella baltica (strain OS223) protein is Putative pseudouridine methyltransferase.